A 177-amino-acid polypeptide reads, in one-letter code: Translation initiation factor IF-3 (177 aa).

It belongs to the IF-3 family. Monomer.

The protein resides in the cytoplasm. IF-3 binds to the 30S ribosomal subunit and shifts the equilibrium between 70S ribosomes and their 50S and 30S subunits in favor of the free subunits, thus enhancing the availability of 30S subunits on which protein synthesis initiation begins. This Acaryochloris marina (strain MBIC 11017) protein is Translation initiation factor IF-3.